A 63-amino-acid polypeptide reads, in one-letter code: Small ribosomal subunit protein bS21 (63 aa).

It belongs to the bacterial ribosomal protein bS21 family.

The polypeptide is Small ribosomal subunit protein bS21 (Azobacteroides pseudotrichonymphae genomovar. CFP2).